The primary structure comprises 75 residues: MAFLKKSLFLVLLLGLISLSICEEEKRENEVEEEQEDDEQSELRRSLWSKIKEMAATAGKAALNAVTGMVNQGEQ.

The signal sequence occupies residues 1 to 22 (MAFLKKSLFLVLLLGLISLSIC). Positions 23–43 (EEEKRENEVEEEQEDDEQSEL) are excised as a propeptide. Glutamine amide is present on Gln-72. Positions 74 to 75 (EQ) are excised as a propeptide.

Belongs to the frog skin active peptide (FSAP) family. Dermaseptin subfamily. In terms of tissue distribution, expressed by the skin glands.

Its subcellular location is the secreted. In terms of biological role, possesses a potent antimicrobial activity against Gram-positive and Gram-negative bacteria. Probably acts by disturbing membrane functions with its amphipathic structure. In Agalychnis annae (Blue-sided leaf frog), this protein is Dermaseptin-A3.